We begin with the raw amino-acid sequence, 405 residues long: Transposase from transposon Tn1545 (405 aa).

The Core-binding (CB) domain maps to 79–163 (GKKMTLCQLY…SLKASFYIAI (85 aa)). The Tyr recombinase domain occupies 186-392 (VPKTVLTEEQ…TFDSAMAEMK (207 aa)). Residues Arg-225, Lys-264, His-343, Arg-346, and His-369 contribute to the active site. The active-site O-(3'-phospho-DNA)-tyrosine intermediate is the Tyr-379.

Belongs to the 'phage' integrase family.

The sequence is that of Transposase from transposon Tn1545 (int) from Streptococcus agalactiae serotype V (strain ATCC BAA-611 / 2603 V/R).